A 390-amino-acid polypeptide reads, in one-letter code: Homoserine O-succinyltransferase (390 aa).

The 311-residue stretch at 59-369 folds into the AB hydrolase-1 domain; the sequence is NAVLVCHALN…PHGHDAFLLD (311 aa). Residue serine 165 is the Nucleophile of the active site. Arginine 235 serves as a coordination point for substrate. Residues aspartate 330 and histidine 363 contribute to the active site. Aspartate 364 provides a ligand contact to substrate.

The protein belongs to the AB hydrolase superfamily. MetX family. In terms of assembly, homodimer.

It localises to the cytoplasm. The enzyme catalyses L-homoserine + succinyl-CoA = O-succinyl-L-homoserine + CoA. The protein operates within amino-acid biosynthesis; L-methionine biosynthesis via de novo pathway; O-succinyl-L-homoserine from L-homoserine: step 1/1. Its function is as follows. Transfers a succinyl group from succinyl-CoA to L-homoserine, forming succinyl-L-homoserine. The sequence is that of Homoserine O-succinyltransferase from Cupriavidus metallidurans (strain ATCC 43123 / DSM 2839 / NBRC 102507 / CH34) (Ralstonia metallidurans).